Reading from the N-terminus, the 313-residue chain is Protein OPG185 (313 aa).

Positions 1 to 16 are cleaved as a signal peptide; that stretch reads MTRLSILLLLISLVYS. Residues 17-277 lie on the Virion surface side of the membrane; that stretch reads TPYPQTQISK…GKYSTKDYVK (261 aa). Residues 18–121 form the Ig-like V-type domain; sequence PYPQTQISKK…TTNDTDKVDY (104 aa). An intrachain disulfide couples Cys36 to Cys105. N-linked (GlcNAc...) asparagine; by host glycans are attached at residues Asn71, Asn114, Asn163, Asn182, and Asn262. The chain crosses the membrane as a helical span at residues 278-301; that stretch reads VFGIAALIILSAVAIFCITYYICN. Topologically, residues 302–313 are intravirion; the sequence is KRSRKYKTENKV.

This sequence belongs to the orthopoxvirus OPG185 family. Heterodimerizes with OPG040. The heterodimer OPG185-OPG040 interacts with components of the entry fusion complex OPG143 and OPG094. Heterodimer with C3/VPC protein; disulfide-linked. Post-translationally, glycosylated; contains phosphate and sulfate-substituted glycans. O-glycosylation is required for hemagglutination and hemadsorption activities of infected cell membranes.

The protein resides in the virion membrane. The protein localises to the host membrane. Its function is as follows. Prevents cell to cell fusion by interacting with and directing the viral OPG040 protein on the host plasma membrane. The OPG185-OPG040 complex associates with components of the entry fusion complex (EFC) presumably to avoid superinfection and syncytium formation. Via its interaction with C3/VCP protein, protects the infected cell and probably also the extracellular enveloped virus from complement attack. In Homo sapiens (Human), this protein is Protein OPG185 (OPG185).